Consider the following 217-residue polypeptide: 3,4-dihydroxy-2-butanone 4-phosphate synthase (217 aa).

Residues 37–38 (RE), Asp-42, 150–154 (RGGHT), and Glu-174 contribute to the D-ribulose 5-phosphate site. Glu-38 contributes to the Mg(2+) binding site. His-153 is a binding site for Mg(2+).

Belongs to the DHBP synthase family. Homodimer. Requires Mg(2+) as cofactor. It depends on Mn(2+) as a cofactor.

The enzyme catalyses D-ribulose 5-phosphate = (2S)-2-hydroxy-3-oxobutyl phosphate + formate + H(+). The protein operates within cofactor biosynthesis; riboflavin biosynthesis; 2-hydroxy-3-oxobutyl phosphate from D-ribulose 5-phosphate: step 1/1. Functionally, catalyzes the conversion of D-ribulose 5-phosphate to formate and 3,4-dihydroxy-2-butanone 4-phosphate. The chain is 3,4-dihydroxy-2-butanone 4-phosphate synthase from Salmonella paratyphi A (strain ATCC 9150 / SARB42).